A 273-amino-acid polypeptide reads, in one-letter code: Undecaprenyl-diphosphatase (273 aa).

A run of 7 helical transmembrane segments spans residues 6–26, 45–65, 90–110, 116–136, 190–210, 222–242, and 252–272; these read SLLI…LPVS, AKTF…VMFW, LTLI…LVFH, LFNP…LIAA, YAAS…ATVL, ADIP…LIAI, and ISFI…YVVF.

The protein belongs to the UppP family.

It localises to the cell inner membrane. The catalysed reaction is di-trans,octa-cis-undecaprenyl diphosphate + H2O = di-trans,octa-cis-undecaprenyl phosphate + phosphate + H(+). Catalyzes the dephosphorylation of undecaprenyl diphosphate (UPP). Confers resistance to bacitracin. This Salmonella arizonae (strain ATCC BAA-731 / CDC346-86 / RSK2980) protein is Undecaprenyl-diphosphatase.